The sequence spans 218 residues: Protein Nef (218 aa).

Positions Met-1–Ala-44 are disordered. Gly-2 is lipidated: N-myristoyl glycine; by host. Ser-6 bears the Phosphoserine; by host mark. Positions Val-14 to Pro-37 are enriched in basic and acidic residues. An acidic; interacts with host PACS1 and PACS2; stabilizes the interaction of NEF/MHC-I with host AP1M1; necessary for MHC-I internalization region spans residues Glu-74–Glu-77. Residues Pro-81–Pro-90 form an SH3-binding; interaction with Src family tyrosine kinases region. The short motif at Pro-84–Pro-87 is the PxxP; stabilizes the interaction of NEF/MHC-I with host AP1M1; necessary for MHC-I internalization element. A mediates dimerization, Nef-PTE1 interaction region spans residues Asp-120–Trp-136. Residues Val-160–Val-192 are binding to ATP6V1H. Residues Leu-176–Leu-177 carry the Dileucine internalization motif; necessary for CD4 internalization motif. A Diacidic; necessary for CD4 internalization motif is present at residues Asp-186–Asp-187.

It belongs to the lentivirus primate group Nef protein family. Monomer; cytosolic form. Homodimer; membrane bound form. Interacts with Nef associated p21-activated kinase (PAK2); this interaction activates PAK2. Associates with the Nef-MHC-I-AP1 complex; this complex is required for MHC-I internalization. Interacts (via C-terminus) with host PI3-kinase. Interacts with host PACS1; this interaction seems to be weak. Interacts with host PACS2. Interacts with host LCK and MAPK3; these interactions inhibit the kinase activity of the latter. Interacts with host ATP6V1H; this interaction may play a role in CD4 endocytosis. Associates with the CD4-Nef-AP2 complex; this complex is required for CD4 internalization. Interacts with host AP2 subunit alpha and AP2 subunit sigma2. Interacts with TCR-zeta chain; this interaction up-regulates the Fas ligand (FasL) surface expression. Interacts with host HCK, LYN, and SRC; these interactions activate the Src family kinases. Interacts with MAP3K5; this interaction inhibits the Fas and TNFR-mediated death signals. Interacts with beta-COP and PTE1. Interacts with human RACK1; this increases Nef phosphorylation by PKC. Interacts with TP53; this interaction decreases the half-life of TP53, protecting the infected cell against p53-mediated apoptosis. The virion-associated Nef proteins are cleaved by the viral protease to release the soluble C-terminal core protein. Nef is probably cleaved concomitantly with viral structural proteins on maturation of virus particles. Post-translationally, myristoylated. In terms of processing, phosphorylated on serine residues, probably by host PKCdelta and theta.

Its subcellular location is the host cell membrane. It is found in the virion. The protein resides in the secreted. It localises to the host Golgi apparatus membrane. Factor of infectivity and pathogenicity, required for optimal virus replication. Alters numerous pathways of T-lymphocyte function and down-regulates immunity surface molecules in order to evade host defense and increase viral infectivity. Alters the functionality of other immunity cells, like dendritic cells, monocytes/macrophages and NK cells. Its function is as follows. In infected CD4(+) T-lymphocytes, down-regulates the surface MHC-I, mature MHC-II, CD4, CD28, CCR5 and CXCR4 molecules. Mediates internalization and degradation of host CD4 through the interaction of with the cytoplasmic tail of CD4, the recruitment of AP-2 (clathrin adapter protein complex 2), internalization through clathrin coated pits, and subsequent transport to endosomes and lysosomes for degradation. Diverts host MHC-I molecules to the trans-Golgi network-associated endosomal compartments by an endocytic pathway to finally target them for degradation. MHC-I down-regulation may involve AP-1 (clathrin adapter protein complex 1) or possibly Src family kinase-ZAP70/Syk-PI3K cascade recruited by PACS2. In consequence infected cells are masked for immune recognition by cytotoxic T-lymphocytes. Decreasing the number of immune receptors also prevents reinfection by more HIV particles (superinfection). Down-regulates host SERINC3 and SERINC5 thereby excluding these proteins from the viral particles. Virion infectivity is drastically higher when SERINC3 or SERINC5 are excluded from the viral envelope, because these host antiviral proteins impair the membrane fusion event necessary for subsequent virion penetration. Functionally, bypasses host T-cell signaling by inducing a transcriptional program nearly identical to that of anti-CD3 cell activation. Interaction with TCR-zeta chain up-regulates the Fas ligand (FasL). Increasing surface FasL molecules and decreasing surface MHC-I molecules on infected CD4(+) cells send attacking cytotoxic CD8+ T-lymphocytes into apoptosis. In terms of biological role, plays a role in optimizing the host cell environment for viral replication without causing cell death by apoptosis. Protects the infected cells from apoptosis in order to keep them alive until the next virus generation is ready to strike. Inhibits the Fas and TNFR-mediated death signals by blocking MAP3K5/ASK1. Decreases the half-life of TP53, protecting the infected cell against p53-mediated apoptosis. Inhibits the apoptotic signals regulated by the Bcl-2 family proteins through the formation of a Nef/PI3-kinase/PAK2 complex that leads to activation of PAK2 and induces phosphorylation of host BAD. Extracellular Nef protein targets CD4(+) T-lymphocytes for apoptosis by interacting with CXCR4 surface receptors. The sequence is that of Protein Nef from Homo sapiens (Human).